The sequence spans 436 residues: Gamma-glutamyl phosphate reductase (436 aa).

The protein belongs to the gamma-glutamyl phosphate reductase family.

It localises to the cytoplasm. It catalyses the reaction L-glutamate 5-semialdehyde + phosphate + NADP(+) = L-glutamyl 5-phosphate + NADPH + H(+). Its pathway is amino-acid biosynthesis; L-proline biosynthesis; L-glutamate 5-semialdehyde from L-glutamate: step 2/2. Functionally, catalyzes the NADPH-dependent reduction of L-glutamate 5-phosphate into L-glutamate 5-semialdehyde and phosphate. The product spontaneously undergoes cyclization to form 1-pyrroline-5-carboxylate. This Prochlorococcus marinus (strain SARG / CCMP1375 / SS120) protein is Gamma-glutamyl phosphate reductase.